Consider the following 265-residue polypeptide: Transmembrane protein 270 (265 aa).

3 consecutive transmembrane segments (helical) span residues 72-92 (PLGQ…WLVL), 130-150 (LFLS…VVTW), and 185-205 (LYWW…YLIT). Residues 229 to 265 (QEVEPQEVSGSSLLPSLSASSDSESGTVLPEQETPRE) are disordered. Low complexity predominate over residues 237 to 253 (SGSSLLPSLSASSDSES).

The protein localises to the membrane. The sequence is that of Transmembrane protein 270 from Homo sapiens (Human).